The sequence spans 39 residues: Photosystem II reaction center protein J (39 aa).

A helical membrane pass occupies residues 7 to 27 (IPLWLVGLVGGLAVITMLSLF).

This sequence belongs to the PsbJ family. As to quaternary structure, PSII is composed of 1 copy each of membrane proteins PsbA, PsbB, PsbC, PsbD, PsbE, PsbF, PsbH, PsbI, PsbJ, PsbK, PsbL, PsbM, PsbT, PsbX, PsbY, PsbZ, Psb30/Ycf12, at least 3 peripheral proteins of the oxygen-evolving complex and a large number of cofactors. It forms dimeric complexes.

It localises to the plastid. The protein resides in the chloroplast thylakoid membrane. Functionally, one of the components of the core complex of photosystem II (PSII). PSII is a light-driven water:plastoquinone oxidoreductase that uses light energy to abstract electrons from H(2)O, generating O(2) and a proton gradient subsequently used for ATP formation. It consists of a core antenna complex that captures photons, and an electron transfer chain that converts photonic excitation into a charge separation. This chain is Photosystem II reaction center protein J, found in Trieres chinensis (Marine centric diatom).